The chain runs to 426 residues: Squamosa promoter-binding-like protein 10 (426 aa).

Residues 178–255 (PPRCQAEGCK…AEHNRRRRKP (78 aa)) form an SBP-type zinc finger. Zn(2+) contacts are provided by C181, C186, C203, H206, C222, C225, H229, and C241. A Bipartite nuclear localization signal motif is present at residues 238 to 254 (KRSCRKRLAEHNRRRRK). Low complexity-rich tracts occupy residues 268–287 (DAAA…AATS) and 401–417 (SDQN…NNNN). Disordered regions lie at residues 268–290 (DAAA…SYTG) and 392–426 (PSTA…VDFM).

In terms of tissue distribution, expressed in stems, leaf sheaths, and young panicles.

It is found in the nucleus. In terms of biological role, trans-acting factor that binds specifically to the consensus nucleotide sequence 5'-TNCGTACAA-3'. This Oryza sativa subsp. indica (Rice) protein is Squamosa promoter-binding-like protein 10 (SPL10).